A 252-amino-acid polypeptide reads, in one-letter code: O-methyltransferase hkm8 (252 aa).

S-adenosyl-L-methionine is bound by residues Glu73, 75–76 (GT), Ser81, and Asp100.

Belongs to the class I-like SAM-binding methyltransferase superfamily. Cation-dependent O-methyltransferase family.

It functions in the pathway secondary metabolite biosynthesis. Its function is as follows. O-methyltransferase; part of the gene cluster that mediates the biosynthesis of hancockiamides, an unusual new family of N-cinnamoylated piperazines. The NRPS hkm10 and the NmrA-like reductase hkm9 are proposed to convert two molecules of L-Phe to the intermediary piperazine called xenocockiamide A. Xenocockiamide A is then converted to hancockiamide D via a series of hydroxylations and O-methylations. The tyrosinase hkm6 may catalyze an aromatic hydroxylation, then the 2-oxoglutarate-dependent Fe(II) dioxygenase hkm4 and the FAD-dependent phenol hydroxylase hkm7 may catalyze consecutive hydroxylations to install 2 more hydroxy groups, and the methyltransferase hkm8 probably catalyzes two methylations using 2 molecules of S-adenosyl-L-methionine (SAM). The NRPS hkm11 activates and transfers trans-cinnamate supplied by the PAL hkm12 to hancockiamide D and produces hancockiamide A. NRPS Hkm11 has the flexibility to tolerate the bulky hancockiamide G as a substrate and the absence of the acetyl-transferase hkm3 opens up the opportunity for hkm11 to introduce a second N-cinnamoyl moiety. The cytochrome P450 monooxygenase hkm5 catalyzes the methylenedioxy bridge formation, converting hancockiamide A into hancockiamide G. Hkm5 can also convert hancockiamide B into hancockiamide C, and hancockiamide D into hancockiamide H. The N-acetyltransferase hkm3 finally transfers an acetyl group to 1-N of piperazine, converting hancockiamide A into hancockiamide B and hancockiamide G into hancockiamide C. This is O-methyltransferase hkm8 from Aspergillus hancockii.